A 601-amino-acid polypeptide reads, in one-letter code: Proline--tRNA ligase (601 aa).

The protein belongs to the class-II aminoacyl-tRNA synthetase family. ProS type 1 subfamily. Homodimer.

The protein resides in the cytoplasm. It catalyses the reaction tRNA(Pro) + L-proline + ATP = L-prolyl-tRNA(Pro) + AMP + diphosphate. Catalyzes the attachment of proline to tRNA(Pro) in a two-step reaction: proline is first activated by ATP to form Pro-AMP and then transferred to the acceptor end of tRNA(Pro). As ProRS can inadvertently accommodate and process non-cognate amino acids such as alanine and cysteine, to avoid such errors it has two additional distinct editing activities against alanine. One activity is designated as 'pretransfer' editing and involves the tRNA(Pro)-independent hydrolysis of activated Ala-AMP. The other activity is designated 'posttransfer' editing and involves deacylation of mischarged Ala-tRNA(Pro). The misacylated Cys-tRNA(Pro) is not edited by ProRS. The polypeptide is Proline--tRNA ligase (Tropheryma whipplei (strain TW08/27) (Whipple's bacillus)).